Here is a 534-residue protein sequence, read N- to C-terminus: Signal recognition particle subunit SRP54 (534 aa).

The segment at methionine 1–leucine 296 is G-domain. GTP-binding positions include glycine 109–threonine 116, aspartate 191–arginine 195, and threonine 249–aspartate 252. Residues glycine 297–arginine 534 are M-domain.

The protein belongs to the GTP-binding SRP family. SRP54 subfamily. As to quaternary structure, fungal signal recognition particle consists of a 7S RNA molecule (scR1) and at least six protein subunits: srp72, srp68, srpA/srp54, sec65, srp21 and srp14.

It is found in the cytoplasm. The protein localises to the endoplasmic reticulum. The catalysed reaction is GTP + H2O = GDP + phosphate + H(+). Signal-recognition-particle (SRP) assembly has a crucial role in targeting secretory proteins to the rough endoplasmic reticulum (ER) membrane. SRP is required for the cotranslational protein translocation for ER import and preferentially recognizes strongly hydrophobic signal sequences. It is involved in targeting the nascent chain-ribosome (RNC) complex to the ER and is proposed to participate in the arrest of nascent chain elongation during membrane targeting. srpA/srp54 binds to the signal sequence of presecretory protein when they emerge from the ribosomes. srpA/srp54 interacts with the scR1 RNA and mediates the association of the resulting SRP-RNC complex with the signal recognition particle receptor (SR) via its alpha subunit srp101. Both, srpA/srp54 and srp101, are locked in their GTP bound forms in the SRP-RNC-SR complex, which dissociates upon transferring the signal sequence to the protein-conducting channel (translocon). After signal sequence transfer, srpA/srp54 and srp101 act as reciprocal GTPase-activating proteins (GAPs), thereby resolving their association. The protein is Signal recognition particle subunit SRP54 (srpA) of Aspergillus niger.